Consider the following 83-residue polypeptide: DNA-directed RNA polymerase subunit Rpo5 (83 aa).

Belongs to the archaeal Rpo5/eukaryotic RPB5 RNA polymerase subunit family. As to quaternary structure, part of the RNA polymerase complex.

The protein resides in the cytoplasm. The catalysed reaction is RNA(n) + a ribonucleoside 5'-triphosphate = RNA(n+1) + diphosphate. Functionally, DNA-dependent RNA polymerase (RNAP) catalyzes the transcription of DNA into RNA using the four ribonucleoside triphosphates as substrates. The chain is DNA-directed RNA polymerase subunit Rpo5 from Metallosphaera sedula (strain ATCC 51363 / DSM 5348 / JCM 9185 / NBRC 15509 / TH2).